A 431-amino-acid chain; its full sequence is 3-phosphoshikimate 1-carboxyvinyltransferase (431 aa).

Residues lysine 21, serine 22, and arginine 26 each coordinate 3-phosphoshikimate. Lysine 21 serves as a coordination point for phosphoenolpyruvate. Glycine 94 and arginine 122 together coordinate phosphoenolpyruvate. 3-phosphoshikimate is bound by residues serine 167, glutamine 169, aspartate 315, and lysine 342. Glutamine 169 lines the phosphoenolpyruvate pocket. Aspartate 315 (proton acceptor) is an active-site residue. Phosphoenolpyruvate contacts are provided by arginine 346 and arginine 388.

Belongs to the EPSP synthase family. In terms of assembly, monomer.

Its subcellular location is the cytoplasm. The enzyme catalyses 3-phosphoshikimate + phosphoenolpyruvate = 5-O-(1-carboxyvinyl)-3-phosphoshikimate + phosphate. The protein operates within metabolic intermediate biosynthesis; chorismate biosynthesis; chorismate from D-erythrose 4-phosphate and phosphoenolpyruvate: step 6/7. Its function is as follows. Catalyzes the transfer of the enolpyruvyl moiety of phosphoenolpyruvate (PEP) to the 5-hydroxyl of shikimate-3-phosphate (S3P) to produce enolpyruvyl shikimate-3-phosphate and inorganic phosphate. In Pelotomaculum thermopropionicum (strain DSM 13744 / JCM 10971 / SI), this protein is 3-phosphoshikimate 1-carboxyvinyltransferase.